Reading from the N-terminus, the 70-residue chain is Small ribosomal subunit protein bS21B (70 aa).

This sequence belongs to the bacterial ribosomal protein bS21 family.

This chain is Small ribosomal subunit protein bS21B, found in Cupriavidus metallidurans (strain ATCC 43123 / DSM 2839 / NBRC 102507 / CH34) (Ralstonia metallidurans).